We begin with the raw amino-acid sequence, 280 residues long: Ribosomal RNA small subunit methyltransferase A (280 aa).

Residues N30, V32, G57, E78, D108, and N125 each coordinate S-adenosyl-L-methionine.

It belongs to the class I-like SAM-binding methyltransferase superfamily. rRNA adenine N(6)-methyltransferase family. RsmA subfamily.

Its subcellular location is the cytoplasm. The enzyme catalyses adenosine(1518)/adenosine(1519) in 16S rRNA + 4 S-adenosyl-L-methionine = N(6)-dimethyladenosine(1518)/N(6)-dimethyladenosine(1519) in 16S rRNA + 4 S-adenosyl-L-homocysteine + 4 H(+). Its function is as follows. Specifically dimethylates two adjacent adenosines (A1518 and A1519) in the loop of a conserved hairpin near the 3'-end of 16S rRNA in the 30S particle. May play a critical role in biogenesis of 30S subunits. This is Ribosomal RNA small subunit methyltransferase A from Leifsonia xyli subsp. xyli (strain CTCB07).